The primary structure comprises 307 residues: tRNA pseudouridine synthase B (307 aa).

Catalysis depends on aspartate 38, which acts as the Nucleophile.

Belongs to the pseudouridine synthase TruB family. Type 1 subfamily.

The catalysed reaction is uridine(55) in tRNA = pseudouridine(55) in tRNA. In terms of biological role, responsible for synthesis of pseudouridine from uracil-55 in the psi GC loop of transfer RNAs. This is tRNA pseudouridine synthase B from Lachnoclostridium phytofermentans (strain ATCC 700394 / DSM 18823 / ISDg) (Clostridium phytofermentans).